The following is a 136-amino-acid chain: Small ribosomal subunit protein uS19 (136 aa).

Belongs to the universal ribosomal protein uS19 family.

In terms of biological role, protein S19 forms a complex with S13 that binds strongly to the 16S ribosomal RNA. The chain is Small ribosomal subunit protein uS19 from Methanocorpusculum labreanum (strain ATCC 43576 / DSM 4855 / Z).